A 275-amino-acid chain; its full sequence is Notch homolog 2 N-terminal-like protein B (275 aa).

Positions 1-25 are cleaved as a signal peptide; the sequence is MPALRPALLWALLALWLCCATPAHA. 4 EGF-like domains span residues 26–63, 64–102, 105–143, and 144–180; these read LQCRDGYEPCVNEGMCVTYHNGTGYCKCPEGFLGEYCQ, HRDPCEKNRCQNGGTCVAQAMLGKATCRCASGFTGEDCQ, TSHPCFVSRPCLNGGTCHMLSRDTYECTCQVGFTGKECQ, and WTDACLSHPCANGSTCTTVANQFSCKCLTGFTGQKCE. Cystine bridges form between Cys28/Cys41, Cys35/Cys51, Cys53/Cys62, Cys68/Cys79, Cys73/Cys90, Cys92/Cys101, Cys109/Cys121, Cys115/Cys131, Cys133/Cys142, Cys148/Cys159, Cys153/Cys168, Cys170/Cys179, Cys186/Cys198, Cys192/Cys207, Cys209/Cys218, Cys225/Cys236, and Cys230/Cys246. Asn46 carries N-linked (GlcNAc...) asparagine glycosylation. Asn155 carries N-linked (GlcNAc...) asparagine glycosylation. The region spanning 182-219 is the EGF-like 5; calcium-binding domain; the sequence is DVNECDIPGHCQHGGICLNLPGSYQCQCLQGFTGQYCD. The EGF-like 6 domain occupies 221-258; it reads LYVPCAPSPCVNGGTCRQTGDFTFECNCLPETVRRGTE.

It belongs to the NOTCH family. In terms of assembly, interacts with NOTCH2. Interacts with DLL1; the interaction is direct. Expressed in radial glia neural stem cells during cortical development.

The protein localises to the secreted. Its function is as follows. Human-specific protein that promotes neural progenitor proliferation and evolutionary expansion of the brain neocortex by regulating the Notch signaling pathway. Able to promote neural progenitor self-renewal, possibly by down-regulating neuronal differentiation genes, thereby delaying the differentiation of neuronal progenitors and leading to an overall final increase in neuronal production. Acts by enhancing the Notch signaling pathway via two different mechanisms that probably work in parallel to reach the same effect. Enhances Notch signaling pathway in a non-cell-autonomous manner via direct interaction with NOTCH2. Also promotes Notch signaling pathway in a cell-autonomous manner through inhibition of cis DLL1-NOTCH2 interactions, which promotes neuronal differentiation. The polypeptide is Notch homolog 2 N-terminal-like protein B (Homo sapiens (Human)).